The sequence spans 101 residues: Small ribosomal subunit protein uS14 (101 aa).

The protein belongs to the universal ribosomal protein uS14 family. In terms of assembly, part of the 30S ribosomal subunit. Contacts proteins S3 and S10.

In terms of biological role, binds 16S rRNA, required for the assembly of 30S particles and may also be responsible for determining the conformation of the 16S rRNA at the A site. In Dechloromonas aromatica (strain RCB), this protein is Small ribosomal subunit protein uS14.